A 209-amino-acid chain; its full sequence is MAAILGKKIGMTRIYNEKREAVPCTVIQAAPCFVSQVKTSDNDGYEAYQLSIGERKEAKVSKPMRGHYAKAGITPGYKIAEFGKDLMDADLELGSSVSVDMFKEGDKVDVRGVTKGKGFAGVVKRHNFAGGSRTHGQSDRLRAPGSVGGSSDPSRTFKGMRMAGRMGSKNVKVRGLQIVKIIPESNLLVIKGSVPGVKNSYVEIVTRNK.

The interval 128 to 156 is disordered; sequence FAGGSRTHGQSDRLRAPGSVGGSSDPSRT.

The protein belongs to the universal ribosomal protein uL3 family. In terms of assembly, part of the 50S ribosomal subunit. Forms a cluster with proteins L14 and L19.

Its function is as follows. One of the primary rRNA binding proteins, it binds directly near the 3'-end of the 23S rRNA, where it nucleates assembly of the 50S subunit. This is Large ribosomal subunit protein uL3 from Prosthecochloris aestuarii (strain DSM 271 / SK 413).